A 134-amino-acid polypeptide reads, in one-letter code: MARTKHTARKSFGGKAPRKSLATKAARKVFPVDGQVKKRYRPSSNALKEIRKYQKSTELLVRKLPFQRLVREVAQEIMPNVRFQSAAIQALHEAAEAYLIGLFEDTNLCAIHAKRVTIMPKDMQLARRIRGERG.

The segment at 1–25 (MARTKHTARKSFGGKAPRKSLATKA) is disordered. An N6-acetyllysine; alternate mark is found at lysine 5 and lysine 10. N6-methylated lysine; alternate occurs at positions 5 and 10. A Phosphoserine modification is found at serine 11. An N6-acetyllysine mark is found at lysine 15 and lysine 24. An N6-methylated lysine mark is found at lysine 28 and lysine 37.

The protein belongs to the histone H3 family. In terms of assembly, the nucleosome is a histone octamer containing two molecules each of H2A, H2B, H3 and H4 assembled in one H3-H4 heterotetramer and two H2A-H2B heterodimers. The octamer wraps approximately 147 bp of DNA. Post-translationally, acetylation is generally linked to gene activation. In terms of processing, methylation at Lys-5 is linked to gene activation. Methylation at Lys-10 is linked to gene repression.

It is found in the nucleus. The protein resides in the chromosome. Its function is as follows. Putative variant histone H3 which may replace conventional H3 in a subset of nucleosomes. Nucleosomes wrap and compact DNA into chromatin, limiting DNA accessibility to the cellular machineries which require DNA as a template. Histones thereby play a central role in transcription regulation, DNA repair, DNA replication and chromosomal stability. DNA accessibility is regulated via a complex set of post-translational modifications of histones, also called histone code, and nucleosome remodeling. The sequence is that of Histone H3.3-like type 1 (his-70) from Caenorhabditis elegans.